Here is a 491-residue protein sequence, read N- to C-terminus: Galactose-1-phosphate uridylyltransferase (491 aa).

Belongs to the galactose-1-phosphate uridylyltransferase type 2 family.

The protein localises to the cytoplasm. It carries out the reaction alpha-D-galactose 1-phosphate + UDP-alpha-D-glucose = alpha-D-glucose 1-phosphate + UDP-alpha-D-galactose. The protein operates within carbohydrate metabolism; galactose metabolism. The polypeptide is Galactose-1-phosphate uridylyltransferase (galT) (Streptococcus mutans serotype c (strain ATCC 700610 / UA159)).